The chain runs to 517 residues: Facilitated trehalose transporter Tret1 (517 aa).

Residues 1 to 56 (MWIEIPECYEVLRNVFSKFRRHSLTAAMVKLLMRADTHVSFTVPAEEPVAKCTFSQ) are Cytoplasmic-facing. The chain crosses the membrane as a helical span at residues 57–77 (VLAALSVSLGSMVVGFSSAYT). The Extracellular portion of the chain corresponds to 78-100 (SPALVSMKDRNITSFEVTDQSGS). An N-linked (GlcNAc...) asparagine glycan is attached at Asn-88. The helical transmembrane segment at 101-121 (WVGGIMPLAGLVGGILGGPLI) threads the bilayer. Topologically, residues 122–135 (EYLGRKNTILATAT) are cytoplasmic. A helical transmembrane segment spans residues 136–156 (PFIISWLLIACATHVAMVLVG). Over 157–158 (RA) the chain is Extracellular. The helical transmembrane segment at 159–179 (LSGFSVGVASLSLPVYLGETV) threads the bilayer. The Cytoplasmic segment spans residues 180–184 (QPEVR). The chain crosses the membrane as a helical span at residues 185-205 (GTLGLLPTAFGNIGILLCFVA). At 206-212 (GNYMDWS) the chain is on the extracellular side. The helical transmembrane segment at 213 to 233 (ELAFLGATLPVPFLILMFLIP) threads the bilayer. Over 234 to 296 (ETPRWYVSRG…DLLKKTNLKP (63 aa)) the chain is Cytoplasmic. A helical transmembrane segment spans residues 297 to 317 (LLISLGLMFFQQLSGINAVIF). Residues 318-333 (YTVQIFQDAGSTIDEN) are Extracellular-facing. The helical transmembrane segment at 334–354 (LCTIIVGVVNFIATFIATLLI) threads the bilayer. Residues 355–360 (DRLGRK) lie on the Cytoplasmic side of the membrane. A helical transmembrane segment spans residues 361–381 (MLLYISDIAMIITLMTLGGFF). Over 382–392 (YVKNNGGDVSH) the chain is Extracellular. Residues 393–413 (IGWLPLASFVIFVLGFSLGFG) form a helical membrane-spanning segment. The Cytoplasmic segment spans residues 414-437 (PIPWLMMGEILPGKIRGSAASVAT). A helical transmembrane segment spans residues 438 to 458 (AFNWSCTFVVTKTFADIIASI). Over 459–461 (GTH) the chain is Extracellular. Residues 462–482 (GAFWMFGSVCVVGLVFVIMYV) form a helical membrane-spanning segment. Topologically, residues 483–517 (PETQGKSLEDIERKMCGRVRRMSSVANIKPLSFNM) are cytoplasmic.

The protein belongs to the major facilitator superfamily. Sugar transporter (TC 2.A.1.1) family. Trehalose transporter subfamily.

The protein localises to the cell membrane. In terms of biological role, high-capacity facilitative transporter for trehalose. Does not transport maltose, sucrose or lactose. Mediates the bidirectional transfer of trehalose. Responsible for the transport of trehalose synthesized in the fat body and the incorporation of trehalose into other tissues that require a carbon source, thereby regulating trehalose levels in the hemolymph. In Culex quinquefasciatus (Southern house mosquito), this protein is Facilitated trehalose transporter Tret1.